The primary structure comprises 272 residues: Phosphoribosylformylglycinamidine synthase subunit PurQ (272 aa).

One can recognise a Glutamine amidotransferase type-1 domain in the interval 8–272; sequence VLVMSGYGIN…FKNAVEYFNK (265 aa). Cys-98 (nucleophile) is an active-site residue. Residues His-225, Glu-227, and Glu-235 contribute to the active site.

As to quaternary structure, part of the FGAM synthase complex composed of 1 PurL, 1 PurQ and 2 PurS subunits.

It is found in the cytoplasm. The catalysed reaction is N(2)-formyl-N(1)-(5-phospho-beta-D-ribosyl)glycinamide + L-glutamine + ATP + H2O = 2-formamido-N(1)-(5-O-phospho-beta-D-ribosyl)acetamidine + L-glutamate + ADP + phosphate + H(+). It carries out the reaction L-glutamine + H2O = L-glutamate + NH4(+). Its pathway is purine metabolism; IMP biosynthesis via de novo pathway; 5-amino-1-(5-phospho-D-ribosyl)imidazole from N(2)-formyl-N(1)-(5-phospho-D-ribosyl)glycinamide: step 1/2. In terms of biological role, part of the phosphoribosylformylglycinamidine synthase complex involved in the purines biosynthetic pathway. Catalyzes the ATP-dependent conversion of formylglycinamide ribonucleotide (FGAR) and glutamine to yield formylglycinamidine ribonucleotide (FGAM) and glutamate. The FGAM synthase complex is composed of three subunits. PurQ produces an ammonia molecule by converting glutamine to glutamate. PurL transfers the ammonia molecule to FGAR to form FGAM in an ATP-dependent manner. PurS interacts with PurQ and PurL and is thought to assist in the transfer of the ammonia molecule from PurQ to PurL. The polypeptide is Phosphoribosylformylglycinamidine synthase subunit PurQ (Methanococcus maripaludis (strain DSM 14266 / JCM 13030 / NBRC 101832 / S2 / LL)).